Reading from the N-terminus, the 347-residue chain is GMP reductase (347 aa).

NADP(+) is bound at residue Ala108–Ala131. Gly181 and Gly183 together coordinate K(+). The active-site Thioimidate intermediate is Cys186. Ile216–Val239 is an NADP(+) binding site.

It belongs to the IMPDH/GMPR family. GuaC type 1 subfamily. Homotetramer.

It carries out the reaction IMP + NH4(+) + NADP(+) = GMP + NADPH + 2 H(+). Catalyzes the irreversible NADPH-dependent deamination of GMP to IMP. It functions in the conversion of nucleobase, nucleoside and nucleotide derivatives of G to A nucleotides, and in maintaining the intracellular balance of A and G nucleotides. The polypeptide is GMP reductase (Salmonella typhi).